We begin with the raw amino-acid sequence, 216 residues long: MAGYRADDEYDYLFKVVLIGDSGVGKSNLLSRFTKNEFSLESKSTIGVEFATRSLNVDDKVIKAQIWDTAGQERYRAITSAYYRGAVGALLVYDVTRHSTFENVETWLKELRNHTDPNIVVMLVGNKSDLRHLVAVQTEDAKSFAEKESLYFMETSALEATNVENAFAEVLTQIHHIVSKKAMEAASESANVPSKGDKIDIGKDVSAVKKGGCCSN.

GTP is bound at residue 20–27 (GDSGVGKS). The Effector region motif lies at 42–50 (SKSTIGVEF). GTP is bound by residues 68-72 (DTAGQ), 126-129 (NKSD), and 156-157 (SA). Residues cysteine 213 and cysteine 214 are each lipidated (S-geranylgeranyl cysteine).

The protein belongs to the small GTPase superfamily. Rab family.

It localises to the cell membrane. Its function is as follows. Intracellular vesicle trafficking and protein transport. This chain is Ras-related protein RABA1c (RABA1C), found in Arabidopsis thaliana (Mouse-ear cress).